The sequence spans 137 residues: Histone H2B (137 aa).

A compositionally biased stretch (basic and acidic residues) spans 1 to 10 (MPPKAADKKP). Residues 1-45 (MPPKAADKKPANKAPATASKAPEKKDAGKKTAASGEKKKRTKARK) are disordered. An N6-acetyllysine; alternate mark is found at Lys8 and Lys9. Residues Lys8 and Lys9 each participate in a glycyl lysine isopeptide (Lys-Gly) (interchain with G-Cter in SUMO); alternate cross-link. Position 13 is an N6-acetyllysine (Lys13). Lys24 is modified (N6-acetyllysine; alternate). Lys24 is covalently cross-linked (Glycyl lysine isopeptide (Lys-Gly) (interchain with G-Cter in SUMO); alternate). A Glycyl lysine isopeptide (Lys-Gly) (interchain with G-Cter in SUMO) cross-link involves residue Lys25. Lys131 is covalently cross-linked (Glycyl lysine isopeptide (Lys-Gly) (interchain with G-Cter in ubiquitin)).

The protein belongs to the histone H2B family. In terms of assembly, the nucleosome is a histone octamer containing two molecules each of H2A, H2B, H3 and H4 assembled in one H3-H4 heterotetramer and two H2A-H2B heterodimers. The octamer wraps approximately 147 bp of DNA. Monoubiquitinated to form H2BK123ub1. H2BK123ub1 gives a specific tag for epigenetic transcriptional activation and is also prerequisite for H3K4me and H3K79me formation. H2BK123ub1 also modulates the formation of double-strand breaks during meiosis and is a prerequisite for DNA-damage checkpoint activation. In terms of processing, acetylated by GCN5 to form H2BK11ac and H2BK16ac. H2BK16ac can also be formed by ESA1. Acetylation of N-terminal lysines and particularly formation of H2BK11acK16ac has a positive effect on transcription. Post-translationally, sumoylation to form H2BK6su or H2BK7su, and probably also H2BK16su or H2BK17su, occurs preferentially near the telomeres and represses gene transcription.

Its subcellular location is the nucleus. It localises to the chromosome. Core component of nucleosome. Nucleosomes wrap and compact DNA into chromatin, limiting DNA accessibility to the cellular machineries which require DNA as a template. Histones thereby play a central role in transcription regulation, DNA repair, DNA replication and chromosomal stability. DNA accessibility is regulated via a complex set of post-translational modifications of histones, also called histone code, and nucleosome remodeling. This Podospora anserina (Pleurage anserina) protein is Histone H2B (HTB1).